We begin with the raw amino-acid sequence, 271 residues long: Transmembrane protein 150A (271 aa).

Residues Met1–Thr2 are Cytoplasmic-facing. A helical transmembrane segment spans residues Ala3–Tyr23. Topologically, residues Ala24–Glu75 are extracellular. N-linked (GlcNAc...) asparagine glycosylation is found at Asn37 and Asn41. The helical transmembrane segment at Ser76 to Leu96 threads the bilayer. Topologically, residues Arg97–Ser108 are cytoplasmic. A helical transmembrane segment spans residues Trp109–Gly129. At Asn130–His140 the chain is on the extracellular side. A helical membrane pass occupies residues Tyr141–Leu161. The Cytoplasmic portion of the chain corresponds to Phe162 to Arg178. The helical transmembrane segment at Ser179 to Glu199 threads the bilayer. Residues Ser200–Glu211 are Extracellular-facing. Residues Trp212–Ile232 traverse the membrane as a helical segment. The Cytoplasmic segment spans residues Ser233 to Ile271.

It belongs to the DRAM/TMEM150 family. Interacts (via C-terminal cytoplasmic tail) with PI4KA.

Its subcellular location is the cell membrane. Functionally, regulates localization of phosphatidylinositol 4-kinase (PI4K) to the plasma membrane, possibly by reducing the association of TTC7 (TTC7A or TTC7B) with the PI4K complex. Acts as a regulator of phosphatidylinositol 4-phosphate (PtdIns(4)P) synthesis. May also play a role in fasting-induced catabolism. The chain is Transmembrane protein 150A (Tmem150a) from Mus musculus (Mouse).